An 82-amino-acid polypeptide reads, in one-letter code: Defensin-like protein 75 (82 aa).

Positions 1–26 are cleaved as a signal peptide; it reads MAKIKSLDVITVAIILLLVIADQATA. 4 disulfides stabilise this stretch: Cys33/Cys66, Cys37/Cys55, Cys41/Cys64, and Cys45/Cys65.

The protein belongs to the DEFL family.

It localises to the secreted. The chain is Defensin-like protein 75 (LCR45) from Arabidopsis thaliana (Mouse-ear cress).